Reading from the N-terminus, the 245-residue chain is NADH-quinone oxidoreductase subunit C (245 aa).

The span at 1–10 (MNAPQDRTDD) shows a compositional bias: basic and acidic residues. Disordered regions lie at residues 1–54 (MNAP…GYGG) and 217–245 (QRKDYPLGGVPVEYKGAEIPPPDRRRSYQ). Over residues 11–28 (GGVPVPVTPAGATGGAPA) the composition is skewed to low complexity. Residues 39-54 (GMFGDQGTGDVSGYGG) show a composition bias toward gly residues.

The protein belongs to the complex I 30 kDa subunit family. As to quaternary structure, NDH-1 is composed of 14 different subunits. Subunits NuoB, C, D, E, F, and G constitute the peripheral sector of the complex.

The protein resides in the cell membrane. The catalysed reaction is a quinone + NADH + 5 H(+)(in) = a quinol + NAD(+) + 4 H(+)(out). NDH-1 shuttles electrons from NADH, via FMN and iron-sulfur (Fe-S) centers, to quinones in the respiratory chain. The immediate electron acceptor for the enzyme in this species is believed to be a menaquinone. Couples the redox reaction to proton translocation (for every two electrons transferred, four hydrogen ions are translocated across the cytoplasmic membrane), and thus conserves the redox energy in a proton gradient. In Salinispora arenicola (strain CNS-205), this protein is NADH-quinone oxidoreductase subunit C.